The sequence spans 267 residues: tRNA pseudouridine synthase A (267 aa).

Aspartate 55 (nucleophile) is an active-site residue. Tyrosine 111 contacts substrate.

This sequence belongs to the tRNA pseudouridine synthase TruA family.

The enzyme catalyses uridine(38/39/40) in tRNA = pseudouridine(38/39/40) in tRNA. Its function is as follows. Formation of pseudouridine at positions 38, 39 and 40 in the anticodon stem and loop of transfer RNAs. The polypeptide is tRNA pseudouridine synthase A (Thermococcus gammatolerans (strain DSM 15229 / JCM 11827 / EJ3)).